We begin with the raw amino-acid sequence, 325 residues long: UPF0285 protein Mbar_A0208 (325 aa).

Belongs to the UPF0285 family.

In Methanosarcina barkeri (strain Fusaro / DSM 804), this protein is UPF0285 protein Mbar_A0208.